The sequence spans 553 residues: Putative transport protein YidE (553 aa).

Transmembrane regions (helical) follow at residues 4–24 (IALT…IGNV), 28–48 (GVGL…HFVS), 65–85 (FGLI…FFAS), 95–115 (LFAV…HKLF), and 158–178 (MSYA…MWML). RCK C-terminal domains are found at residues 191–276 (QQHE…VIGQ) and 279–361 (DTSL…VLGN). Transmembrane regions (helical) follow at residues 371-391 (MLPV…PVFV), 393-413 (GFPA…ALIL), 439-459 (IVLF…HTLV), 464-484 (LSWI…VGIL), 493-513 (YLTM…LAFA), and 533-553 (LVMF…WSIG).

Belongs to the AAE transporter (TC 2.A.81) family. YidE subfamily.

The protein resides in the cell membrane. This chain is Putative transport protein YidE, found in Escherichia coli O6:H1 (strain CFT073 / ATCC 700928 / UPEC).